Reading from the N-terminus, the 249-residue chain is MSDSVVAVSASPVTPQTASAEKKVAAKKPASASASKAKKTTAPPTHPPTQQMVDASIQNLKERGGSSLLAIKKYISATYKCDAQKLAPFIKKYLKNSVANGKLIQTKGKGASGSFKLSASSKKEPKPKVSSVEKKSKKVTSSAAAAKKKTISATKKPKGVADKKLSKAVVTKKSVDKKKAEKAKAKDAKKVGTIKAKPTTAKAKSSAAKPKTPKPKTTSAKPKKVVAAASPKKAAAKKPKAKTASATKK.

2 stretches are compositionally biased toward low complexity: residues 1–19 (MSDS…QTAS) and 27–43 (KKPA…TTAP). 2 disordered regions span residues 1 to 53 (MSDS…QQMV) and 105 to 249 (QTKG…ATKK). The region spanning 45 to 119 (THPPTQQMVD…GASGSFKLSA (75 aa)) is the H15 domain. Positions 121–134 (SKKEPKPKVSSVEK) are enriched in basic and acidic residues. Over residues 146–158 (AKKKTISATKKPK) the composition is skewed to basic residues. The span at 173–190 (KSVDKKKAEKAKAKDAKK) shows a compositional bias: basic and acidic residues. Residues 195 to 233 (KAKPTTAKAKSSAAKPKTPKPKTTSAKPKKVVAAASPKK) are compositionally biased toward low complexity. Over residues 234 to 249 (AAAKKPKAKTASATKK) the composition is skewed to basic residues.

It belongs to the histone H1/H5 family.

Its subcellular location is the nucleus. It is found in the chromosome. Its function is as follows. Histones H1 are necessary for the condensation of nucleosome chains into higher-order structures. The protein is Histone H1 (His1) of Drosophila hydei (Fruit fly).